A 454-amino-acid chain; its full sequence is Ornithine aminotransferase (454 aa).

Lys280 is subject to N6-(pyridoxal phosphate)lysine.

This sequence belongs to the class-III pyridoxal-phosphate-dependent aminotransferase family. It depends on pyridoxal 5'-phosphate as a cofactor.

The protein resides in the cytoplasm. It catalyses the reaction a 2-oxocarboxylate + L-ornithine = L-glutamate 5-semialdehyde + an L-alpha-amino acid. It functions in the pathway amino-acid biosynthesis; L-proline biosynthesis; L-glutamate 5-semialdehyde from L-ornithine: step 1/1. The polypeptide is Ornithine aminotransferase (otaA) (Emericella nidulans (strain FGSC A4 / ATCC 38163 / CBS 112.46 / NRRL 194 / M139) (Aspergillus nidulans)).